The following is a 235-amino-acid chain: Superoxide dismutase [Mn] 3.1, mitochondrial (235 aa).

The N-terminal 31 residues, 1–31 (MALRTLASKKVLSFPFGGAGRPLAAAASARG), are a transit peptide targeting the mitochondrion. Mn(2+) contacts are provided by His59, His107, Asp196, and His200.

It belongs to the iron/manganese superoxide dismutase family. Homotetramer. The cofactor is Mn(2+).

It localises to the mitochondrion matrix. The enzyme catalyses 2 superoxide + 2 H(+) = H2O2 + O2. Functionally, destroys superoxide anion radicals which are normally produced within the cells and which are toxic to biological systems. The protein is Superoxide dismutase [Mn] 3.1, mitochondrial (SODA.4) of Zea mays (Maize).